The following is a 272-amino-acid chain: ATP synthase subunit a (272 aa).

Transmembrane regions (helical) follow at residues 41 to 61 (TLNI…LVLF), 101 to 121 (LIAP…LMDL), 147 to 167 (DVNI…FYSI), 212 to 232 (LFGN…LLPW), and 243 to 263 (AIFH…LTIV).

The protein belongs to the ATPase A chain family. F-type ATPases have 2 components, CF(1) - the catalytic core - and CF(0) - the membrane proton channel. CF(1) has five subunits: alpha(3), beta(3), gamma(1), delta(1), epsilon(1). CF(0) has three main subunits: a(1), b(2) and c(9-12). The alpha and beta chains form an alternating ring which encloses part of the gamma chain. CF(1) is attached to CF(0) by a central stalk formed by the gamma and epsilon chains, while a peripheral stalk is formed by the delta and b chains.

Its subcellular location is the cell inner membrane. Its function is as follows. Key component of the proton channel; it plays a direct role in the translocation of protons across the membrane. This chain is ATP synthase subunit a, found in Cronobacter sakazakii (strain ATCC BAA-894) (Enterobacter sakazakii).